A 1868-amino-acid polypeptide reads, in one-letter code: Dedicator of cytokinesis protein 5 (1868 aa).

In terms of domain architecture, SH3 spans 8–69; sequence KRQKYGVAIY…PETYIHLKEA (62 aa). Phosphoserine is present on serine 365. The C2 DOCK-type domain occupies 443–627; the sequence is RNDIYVTLIH…DSFQIATLIC (185 aa). The residue at position 818 (lysine 818) is an N6-acetyllysine. Positions 1231-1642 constitute a DOCKER domain; the sequence is YKDKKREDIY…VEKLYGVITL (412 aa). A compositionally biased stretch (low complexity) spans 1681 to 1692; it reads STSSNSSDNASS. 2 disordered regions span residues 1681 to 1730 and 1742 to 1868; these read STSS…RISK and QVIA…PGSQ. The segment covering 1704–1728 has biased composition (basic and acidic residues); sequence LFERRASSGARVEDLPPKEDSENRI. Phosphoserine is present on residues serine 1755, serine 1765, serine 1771, serine 1784, and serine 1788. Threonine 1793 is subject to Phosphothreonine. The span at 1796–1810 shows a compositional bias: polar residues; sequence ATRTLSSPSLQTDGL. A phosphoserine mark is found at serine 1832 and serine 1867.

It belongs to the DOCK family. As to quaternary structure, interacts with CRK and CRKL. Interacts (via N-terminus) with tensin TNS3 (via N-terminus); the interaction increases DOCK5 guanine nucleotide exchange activity towards Rac. Interacts with ELMO1. As to expression, highly expressed in lens, where it predominantly localizes to anterior epithelial cells, and is weakly expressed in lens fiber (at protein level). Expressed in brain, eye, lung, spleen and kidney, but not in thymus or peripheral blood leukocytes.

It localises to the cytoplasm. The protein resides in the cell membrane. The protein localises to the cell projection. Its subcellular location is the podosome. Functionally, guanine nucleotide exchange factor (GEF) for Rho and Rac. GEF proteins activate small GTPases by exchanging bound GDP for free GTP. Along with DOCK1, mediates CRK/CRKL regulation of epithelial and endothelial cell spreading and migration on type IV collagen. The sequence is that of Dedicator of cytokinesis protein 5 from Mus musculus (Mouse).